Consider the following 164-residue polypeptide: MERFLENVMYASRWLLAPVYFGLSLALIALALKFFQDILHVLPNVFALAEADLILVLLSLVDMTLVGGLLVMVMFSGYENFVSQLDISAGKEKLNWLGKMDATSLKNKVAASIVAISSIHLLRVFMDAKNVPDNKLMWYVIIHLTFVLSAFVMGYLDRLTRHNH.

3 consecutive transmembrane segments (helical) span residues 15–35, 53–73, and 136–156; these read LLAP…LKFF, LILV…LVMV, and LMWY…MGYL.

Belongs to the UPF0114 family.

It is found in the cell membrane. The sequence is that of UPF0114 protein YqhA from Salmonella dublin (strain CT_02021853).